A 1142-amino-acid polypeptide reads, in one-letter code: Serine/threonine-protein kinase dst2 (1142 aa).

One can recognise a Protein kinase domain in the interval 20 to 276; sequence FELIEEIAEG…ATELLKHPFV (257 aa). ATP-binding positions include 26 to 34 and lysine 49; that span reads IAEGSFGTV. The active-site Proton acceptor is the aspartate 141. A compositionally biased stretch (acidic residues) spans 300-322; that stretch reads LEEGGDEDEDSSEQEGMDSDDKD. Disordered stretches follow at residues 300 to 492, 515 to 636, 744 to 768, 939 to 974, and 1040 to 1142; these read LEEG…KTLE, KKQQ…KSTP, ETNH…TEQR, SIEE…GSVT, and EEQK…DNQD. The segment covering 323-336 has biased composition (basic and acidic residues); it reads SDLKKSVGTSDRKS. Polar residues predominate over residues 355 to 365; the sequence is QRKSTGQNLQL. Residues 371 to 390 show a composition bias toward low complexity; that stretch reads QQSSSSSSSSSSSLSSQSLQ. The span at 391-413 shows a compositional bias: polar residues; that stretch reads PQAVNKSTDRLSANINGSNTKSN. Residues 421–452 show a composition bias toward low complexity; that stretch reads AAASASASSLNLSTGNLQQSLSGSGSITTNSG. Over residues 467–477 the composition is skewed to basic and acidic residues; sequence SSDDRSPDIRT. The segment covering 541–554 has biased composition (low complexity); the sequence is KQNAAKATQQQKQS. 4 stretches are compositionally biased toward basic and acidic residues: residues 555–588, 597–635, 744–760, and 939–969; these read AAKE…KKNQ, KVTD…DKST, ETNH…EQHI, and SIEE…EQKK. A coiled-coil region spans residues 716–1050; that stretch reads QEYHTVLREN…EQKKSKLKLK (335 aa). Residues 1068–1091 are compositionally biased toward low complexity; sequence TGTTPPSTSSNQKTLNNSNGASSN.

This sequence belongs to the protein kinase superfamily. STE Ser/Thr protein kinase family. STE20 subfamily. Mg(2+) serves as cofactor.

It carries out the reaction L-seryl-[protein] + ATP = O-phospho-L-seryl-[protein] + ADP + H(+). It catalyses the reaction L-threonyl-[protein] + ATP = O-phospho-L-threonyl-[protein] + ADP + H(+). The chain is Serine/threonine-protein kinase dst2 from Dictyostelium discoideum (Social amoeba).